The following is a 56-amino-acid chain: Large ribosomal subunit protein bL32 (56 aa).

The span at 1 to 19 (MAVPKRKKSRSTTRHRRAQ) shows a compositional bias: basic residues. Residues 1 to 22 (MAVPKRKKSRSTTRHRRAQWKT) are disordered.

This sequence belongs to the bacterial ribosomal protein bL32 family.

The polypeptide is Large ribosomal subunit protein bL32 (Cutibacterium acnes (strain DSM 16379 / KPA171202) (Propionibacterium acnes)).